The sequence spans 466 residues: uncharacterized protein (466 aa).

One can recognise a C2 NT-type domain in the interval 4-199; that stretch reads NHNSKAKRPK…IINVSLQLKL (196 aa). Disordered stretches follow at residues 262–298, 374–393, and 400–452; these read AKPG…STTI, LGNK…YSTM, and EKKQ…LTDR. Polar residues predominate over residues 266-298; it reads TNATGNSTSIKSPTSTNHKSSEMTTKPGLSTTI. A phosphoserine mark is found at Ser-433 and Ser-439.

To S.pombe SpCC1494.08c.

This is an uncharacterized protein from Saccharomyces cerevisiae (strain ATCC 204508 / S288c) (Baker's yeast).